A 112-amino-acid chain; its full sequence is UPF0235 protein RHE_CH03912 (112 aa).

The protein belongs to the UPF0235 family.

The polypeptide is UPF0235 protein RHE_CH03912 (Rhizobium etli (strain ATCC 51251 / DSM 11541 / JCM 21823 / NBRC 15573 / CFN 42)).